An 86-amino-acid polypeptide reads, in one-letter code: Small ribosomal subunit protein bS20 (86 aa).

This sequence belongs to the bacterial ribosomal protein bS20 family.

Its function is as follows. Binds directly to 16S ribosomal RNA. This Paenarthrobacter aurescens (strain TC1) protein is Small ribosomal subunit protein bS20.